A 215-amino-acid chain; its full sequence is uncharacterized protein (215 aa).

This is an uncharacterized protein from Haemophilus influenzae (strain ATCC 51907 / DSM 11121 / KW20 / Rd).